The sequence spans 273 residues: MPELPEVEVTRRGVAPYLEGQVVSGVVLRHTGLRWPFPAALSQTLAGRTIRSTGRRGKYLLIHFDHGTLIVHLGMSGHIRILPLGVPPQKHDHFDMTVGNQVLRLTDPRRFGAVLWHAAEEGAVDQHLLLRTLGVEPLEGLFTAQWLYRQTRSRRSAIKQVLLAGDIVVGVGNIYASESLFQAGINPKTQAHRIGLQRYERLAQAIREILAAAIAQGGSTLKDFIGVNGQSGYFQQNYFVYARTGEPCRICNAPVRQIVQGQRSTFYCPNCQK.

Pro2 serves as the catalytic Schiff-base intermediate with DNA. Glu3 acts as the Proton donor in catalysis. Lys58 acts as the Proton donor; for beta-elimination activity in catalysis. DNA contacts are provided by His91, Arg109, and Arg154. The FPG-type zinc finger occupies 239 to 273 (FVYARTGEPCRICNAPVRQIVQGQRSTFYCPNCQK). The Proton donor; for delta-elimination activity role is filled by Arg263.

The protein belongs to the FPG family. In terms of assembly, monomer. It depends on Zn(2+) as a cofactor.

The catalysed reaction is Hydrolysis of DNA containing ring-opened 7-methylguanine residues, releasing 2,6-diamino-4-hydroxy-5-(N-methyl)formamidopyrimidine.. It carries out the reaction 2'-deoxyribonucleotide-(2'-deoxyribose 5'-phosphate)-2'-deoxyribonucleotide-DNA = a 3'-end 2'-deoxyribonucleotide-(2,3-dehydro-2,3-deoxyribose 5'-phosphate)-DNA + a 5'-end 5'-phospho-2'-deoxyribonucleoside-DNA + H(+). In terms of biological role, involved in base excision repair of DNA damaged by oxidation or by mutagenic agents. Acts as a DNA glycosylase that recognizes and removes damaged bases. Has a preference for oxidized purines, such as 7,8-dihydro-8-oxoguanine (8-oxoG). Has AP (apurinic/apyrimidinic) lyase activity and introduces nicks in the DNA strand. Cleaves the DNA backbone by beta-delta elimination to generate a single-strand break at the site of the removed base with both 3'- and 5'-phosphates. This chain is Formamidopyrimidine-DNA glycosylase, found in Herminiimonas arsenicoxydans.